Consider the following 120-residue polypeptide: V-type proton ATPase subunit F (120 aa).

The protein belongs to the V-ATPase F subunit family. V-ATPase is a heteromultimeric enzyme composed of a peripheral catalytic V1 complex (components A to H) attached to an integral membrane V0 proton pore complex (components: a, c, c', c'', d, e, f and VOA1).

Its subcellular location is the vacuole membrane. Functionally, subunit of the V1 complex of vacuolar(H+)-ATPase (V-ATPase), a multisubunit enzyme composed of a peripheral complex (V1) that hydrolyzes ATP and a membrane integral complex (V0) that translocates protons. V-ATPase is responsible for acidifying and maintaining the pH of intracellular compartments. This Schizosaccharomyces pombe (strain 972 / ATCC 24843) (Fission yeast) protein is V-type proton ATPase subunit F.